A 41-amino-acid chain; its full sequence is U-AITX-Bg1a (41 aa).

3 disulfide bridges follow: Cys-2–Cys-35, Cys-4–Cys-28, and Cys-18–Cys-36.

It belongs to the sea anemone type 3 (BDS) potassium channel toxin family.

It is found in the secreted. Its subcellular location is the nematocyst. Functionally, potently and selectively inhibits voltage-gated potassium channels Kv11/KCNH/ERG. Acts as a gating-modifier toxin that shifts the voltage-dependence of ERG activation in the positive direction and suppresses its current amplitudes elicited by strong depolarizing pulses that maximally activate the channels. The chain is U-AITX-Bg1a from Bunodosoma granuliferum (Red warty sea anemone).